The primary structure comprises 489 residues: Glycogen synthase (489 aa).

ADP-alpha-D-glucose is bound at residue Arg-20.

This sequence belongs to the glycosyltransferase 1 family. Bacterial/plant glycogen synthase subfamily.

It carries out the reaction [(1-&gt;4)-alpha-D-glucosyl](n) + ADP-alpha-D-glucose = [(1-&gt;4)-alpha-D-glucosyl](n+1) + ADP + H(+). It participates in glycan biosynthesis; glycogen biosynthesis. Its function is as follows. Synthesizes alpha-1,4-glucan chains using ADP-glucose. The polypeptide is Glycogen synthase (Chlorobium phaeovibrioides (strain DSM 265 / 1930) (Prosthecochloris vibrioformis (strain DSM 265))).